The chain runs to 469 residues: Transcription factor SOX-10 (469 aa).

Disordered stretches follow at residues 1–70 (MAEE…DDDK), 163–203 (LRMQ…QGGA), 215–278 (LDHR…DFGN), 357–378 (AQVKTETAGPQGPSHYSDQPST), and 436–469 (RPLYTAISDPSPSGPQSHSPTHWEQPVYTTLSRP). Over residues 23–32 (LSPGSAPSLG) the composition is skewed to low complexity. Ser-24 is subject to Phosphoserine. Residues 33–44 (PDGGGGGGGGSG) show a composition bias toward gly residues. The interval 65 to 105 (EADDDKFPVCIREAVSQVLSGYDWTLVPMPVRVNGASKSKP) is dimerization (DIM). Positions 107–175 (VKRPMNAFMV…QHKKDHPDYK (69 aa)) form a DNA-binding region, HMG box. 2 stretches are compositionally biased toward basic and acidic residues: residues 163–176 (LRMQHKKDHPDYKY) and 257–274 (ADPKRDGRSMGEGGKPHI). A transactivation domain (TAM) region spans residues 231-313 (PEHPSGQSHG…LPPNGHPGHV (83 aa)). A transactivation domain (TAC) region spans residues 356–469 (KAQVKTETAG…QPVYTTLSRP (114 aa)). The segment covering 443–469 (SDPSPSGPQSHSPTHWEQPVYTTLSRP) has biased composition (polar residues).

As to quaternary structure, monomer. Interacts with ARMCX3 at the mitochondrial outer membrane surface. Interacts with PAX3.

Its subcellular location is the cytoplasm. The protein localises to the nucleus. It is found in the mitochondrion outer membrane. Its function is as follows. Transcription factor that plays a central role in developing and mature glia. Specifically activates expression of myelin genes, during oligodendrocyte (OL) maturation, such as DUSP15 and MYRF, thereby playing a central role in oligodendrocyte maturation and CNS myelination. Once induced, MYRF cooperates with SOX10 to implement the myelination program. Transcriptional activator of MITF, acting synergistically with PAX3. Transcriptional activator of MBP, via binding to the gene promoter. The sequence is that of Transcription factor SOX-10 (SOX10) from Sus scrofa (Pig).